The sequence spans 625 residues: MESKYVLSTEKESKTKPSGRVNVSDMDSISNSLSKTSLGTRKVPTSLKTDASRSGLSSGGSKTHISDESALRMVYGSTPRDEKTTTTKDSITLAKEKEKKIEKRNEEIKLTFKAIRASECVDLLFIVDCTGSMDPYIEQIKSDIVKLQEALKLKHSFLDIEFGFIRYTDFDVASNRCSTFQFSRSTVEFVRFVSEIRAGGGADGPEDVFGGMDLIKSMKWRPNSTRVVIHIADAPCHGTEYHSMADSYPGGDPNGIKLDDLLTDIISLNINYYFGHINLKETGQMIDFFDKKTKEISRNKKSINSFDSKETSKMNERIFISIEESISVSRSVLTEQYLGHNIDGSTGKQRSEREFEINTNMDIDFGELPYIQMLQTKFKMPSDIVTCLSSSYEMKLNEITISIKIAPNPFSHGACRLAYLGIDEHGKKVVLKQSKYIGGRENSKKRYFESMECQTVAAKFALEFNKQLSLTSSEHQITFTVAKVLQMKHSEKPMYFGIETFINGEYQKYNSNCGWLKDDAMSEILQTFSHWTYQESKNKAIVVDIQGVKTSKGYLLTDPAIHSTDTLRFGSCNLGKPGIIKFFQSHKCNQHCKKLGLTIPSFTSSSSTSSSSRSTSSSSSISYSY.

Positions 1–15 (MESKYVLSTEKESKT) are enriched in basic and acidic residues. The segment at 1–64 (MESKYVLSTE…GLSSGGSKTH (64 aa)) is disordered. Polar residues-rich tracts occupy residues 25 to 39 (DMDS…TSLG) and 46 to 63 (SLKT…GSKT). Positions 87-114 (TKDSITLAKEKEKKIEKRNEEIKLTFKA) form a coiled coil. A VWFA domain is found at 122–322 (DLLFIVDCTG…KMNERIFISI (201 aa)). In terms of domain architecture, Alpha-type protein kinase spans 386–600 (TCLSSSYEMK…HCKKLGLTIP (215 aa)). An ATP-binding site is contributed by 570–576 (GSCNLGK). Positions 602–625 (FTSSSSTSSSSRSTSSSSSISYSY) are disordered.

The protein belongs to the protein kinase superfamily. Alpha-type protein kinase family. ALPK subfamily. In terms of assembly, interacts with calmodulin; in the presence of calcium. In terms of processing, autophosphorylated, in vitro.

Its subcellular location is the cytoplasm. It is found in the cytosol. It localises to the perinuclear region. The protein resides in the contractile vacuole membrane. It catalyses the reaction L-seryl-[protein] + ATP = O-phospho-L-seryl-[protein] + ADP + H(+). The catalysed reaction is L-threonyl-[protein] + ATP = O-phospho-L-threonyl-[protein] + ADP + H(+). Autophosphorylation activity enhanced by calcium/calmodulin. Functionally, displays a modest preference for threonine over serine residues. Does not phosphorylate myosin II, however can phosphorylate MBP, in vitro. May be involved in the regulation of myosin II function during cytokinesis. Overexpression leads to impaired cell proliferation in suspension culture and fails to develop beyond the mound stage. Both overexpression and absence of the gene can result in defects in cytokinesis and alterations in myosin II abundance and assembly. The chain is Alpha-protein kinase vwkA (vwkA) from Dictyostelium discoideum (Social amoeba).